The sequence spans 259 residues: Potassium/proton antiporter CemA (259 aa).

The next 4 membrane-spanning stretches (helical) occupy residues 47-67 (CLLV…EPWV), 136-156 (IITH…YLVM), 184-204 (ILLA…ELLI), and 219-239 (IISS…KYWI).

The protein belongs to the CemA family.

It localises to the plastid. Its subcellular location is the chloroplast inner membrane. It carries out the reaction K(+)(in) + H(+)(out) = K(+)(out) + H(+)(in). Its function is as follows. Contributes to K(+)/H(+) antiport activity by supporting proton efflux to control proton extrusion and homeostasis in chloroplasts in a light-dependent manner to modulate photosynthesis. Prevents excessive induction of non-photochemical quenching (NPQ) under continuous-light conditions. Indirectly promotes efficient inorganic carbon uptake into chloroplasts. This Welwitschia mirabilis (Tree tumbo) protein is Potassium/proton antiporter CemA.